A 156-amino-acid chain; its full sequence is Endoribonuclease YbeY (156 aa).

H122, H126, and H132 together coordinate Zn(2+).

This sequence belongs to the endoribonuclease YbeY family. Zn(2+) serves as cofactor.

The protein resides in the cytoplasm. In terms of biological role, single strand-specific metallo-endoribonuclease involved in late-stage 70S ribosome quality control and in maturation of the 3' terminus of the 16S rRNA. This chain is Endoribonuclease YbeY, found in Bacillus cereus (strain ZK / E33L).